The chain runs to 337 residues: Holliday junction branch migration complex subunit RuvB (337 aa).

The tract at residues 1 to 179 (MTHQVSVLHQ…FSFTGRVAYY (179 aa)) is large ATPase domain (RuvB-L). ATP contacts are provided by residues leucine 18, arginine 19, glycine 60, lysine 63, threonine 64, serine 65, 126 to 128 (EDY), arginine 169, tyrosine 179, and arginine 216. Threonine 64 contributes to the Mg(2+) binding site. The segment at 180 to 250 (SDEDLATILR…VAEKALAMLL (71 aa)) is small ATPAse domain (RuvB-S). The interval 253–337 (EWGLNEIDIK…DNLQSLGEEK (85 aa)) is head domain (RuvB-H). DNA-binding residues include lysine 308 and arginine 313.

Belongs to the RuvB family. As to quaternary structure, homohexamer. Forms an RuvA(8)-RuvB(12)-Holliday junction (HJ) complex. HJ DNA is sandwiched between 2 RuvA tetramers; dsDNA enters through RuvA and exits via RuvB. An RuvB hexamer assembles on each DNA strand where it exits the tetramer. Each RuvB hexamer is contacted by two RuvA subunits (via domain III) on 2 adjacent RuvB subunits; this complex drives branch migration. In the full resolvosome a probable DNA-RuvA(4)-RuvB(12)-RuvC(2) complex forms which resolves the HJ.

The protein resides in the cytoplasm. It carries out the reaction ATP + H2O = ADP + phosphate + H(+). Its function is as follows. The RuvA-RuvB-RuvC complex processes Holliday junction (HJ) DNA during genetic recombination and DNA repair, while the RuvA-RuvB complex plays an important role in the rescue of blocked DNA replication forks via replication fork reversal (RFR). RuvA specifically binds to HJ cruciform DNA, conferring on it an open structure. The RuvB hexamer acts as an ATP-dependent pump, pulling dsDNA into and through the RuvAB complex. RuvB forms 2 homohexamers on either side of HJ DNA bound by 1 or 2 RuvA tetramers; 4 subunits per hexamer contact DNA at a time. Coordinated motions by a converter formed by DNA-disengaged RuvB subunits stimulates ATP hydrolysis and nucleotide exchange. Immobilization of the converter enables RuvB to convert the ATP-contained energy into a lever motion, pulling 2 nucleotides of DNA out of the RuvA tetramer per ATP hydrolyzed, thus driving DNA branch migration. The RuvB motors rotate together with the DNA substrate, which together with the progressing nucleotide cycle form the mechanistic basis for DNA recombination by continuous HJ branch migration. Branch migration allows RuvC to scan DNA until it finds its consensus sequence, where it cleaves and resolves cruciform DNA. The sequence is that of Holliday junction branch migration complex subunit RuvB from Chlamydia abortus (strain DSM 27085 / S26/3) (Chlamydophila abortus).